The following is a 228-amino-acid chain: MTMGDKKSPTRPKRQAKPAADEGFWDCSVCTFRNSAEAFKCSICDVRKGTSTRKPRINSQLVAQQVAQQYATPPPPKKEKKEKVEKPDKEKPEKDKDISPSVTKKNTNKKTKPKSDILKDPPSEANSIQSANATTKTSETNHTSRPRLKNVDRSTAQQLAVTVGNVTVIITDFKEKTRSSSTSSSTVTSSAGSEQQNQSSSGSESTDKGSSRSSTPKGDMSAVNDESF.

Disordered stretches follow at residues 1 to 21 (MTMGDKKSPTRPKRQAKPAAD), 47 to 157 (RKGT…STAQ), and 172 to 228 (DFKE…DESF). The RanBP2-type zinc finger occupies 21-50 (DEGFWDCSVCTFRNSAEAFKCSICDVRKGT). Positions 76–98 (PKKEKKEKVEKPDKEKPEKDKDI) are enriched in basic and acidic residues. Lys77 is covalently cross-linked (Glycyl lysine isopeptide (Lys-Gly) (interchain with G-Cter in SUMO2)). Ser99 carries the phosphoserine modification. Residues 113-122 (PKSDILKDPP) show a composition bias toward basic and acidic residues. A phosphoserine mark is found at Ser123, Ser127, and Ser130. Residues 124–143 (EANSIQSANATTKTSETNHT) show a composition bias toward polar residues. Residues 143–226 (TSRPRLKNVD…KGDMSAVNDE (84 aa)) are interaction with GABPB1 and FANK1. The segment covering 179–204 (SSSTSSSTVTSSAGSEQQNQSSSGSE) has biased composition (low complexity). Ser227 is modified (phosphoserine).

In terms of assembly, monomer. Component of repressive BCOR complex containing Polycomb group subcomplex at least composed of BCOR, PCGF1, RING1 and RNF2/RING2. Component of PCR1-like complexes. Interacts with PCGF1. Part of a PCR1-like complex that contains AUTS2, PCGF5, RNF2, CSNK2B and RYBP. Interacts with RNF2; the interaction is direct. Interacts with CBX2, YAF2, RING1 and RNF2. Interacts with ubiquitin and ubiquitinated proteins. Interacts with ubiquitinated histone H2A. Interacts with apoptin, DEDD, FADD, CASP8, CASP10, YY1 and GABPB1. Together with GABPB1 and YY1, it forms a ternary complex, probably being the bridge factor between these two transcription factors. Interacts with MDM2, and thereby inhibits ubiquitination of TP53. Identified in a ternary complex containing MDM2, TP53 and RYBP. Interacts with FANK1; may prevent the ubiquitin-mediated proteasomal degradation of FANK1. Interacts with IFT57. Post-translationally, monoubiquitinated. Expressed in embryonic stem cells.

It localises to the nucleus. The protein resides in the cytoplasm. Its subcellular location is the nucleoplasm. In terms of biological role, component of a Polycomb group (PcG) multiprotein PRC1-like complex, a complex class required to maintain the transcriptionally repressive state of many genes, including Hox genes, throughout development. PcG PRC1-like complex acts via chromatin remodeling and modification of histones; it mediates monoubiquitination of histone H2A 'Lys-119', rendering chromatin heritably changed in its expressibility. Component of a PRC1-like complex that mediates monoubiquitination of histone H2A 'Lys-119' on the X chromosome and is required for normal silencing of one copy of the X chromosome in XX females. May stimulate ubiquitination of histone H2A 'Lys-119' by recruiting the complex to target sites. Inhibits ubiquitination and subsequent degradation of TP53, and thereby plays a role in regulating transcription of TP53 target genes. May also regulate the ubiquitin-mediated proteasomal degradation of other proteins like FANK1 to regulate apoptosis. May be implicated in the regulation of the transcription as a repressor of the transcriptional activity of E4TF1. May bind to DNA. May play a role in the repression of tumor growth and metastasis in breast cancer by down-regulating SRRM3. The chain is RING1 and YY1-binding protein (Rybp) from Mus musculus (Mouse).